Reading from the N-terminus, the 410-residue chain is Polyprenol-phosphate-mannose-dependent alpha-(1-2)-phosphatidylinositol pentamannoside mannosyltransferase (410 aa).

10 consecutive transmembrane segments (helical) span residues 31-51 (LAPMLLVVSILARLAWTYLVP), 96-116 (FAAIVFYPLHLLPFGVVAFIW), 160-180 (TFDYGQVNVVLVLAVLCAVST), 188-208 (LLVGLAAGIKLTPAVAGLYFL), 214-234 (AAVACSAAVFFATVGVSWLVV), 276-296 (GFGPLVLIGIGITAVLALLAW), 306-326 (LGGILVVSLFGLVLSPISWTH), 328-348 (WVWLIPLMMWLLHGPLSALRG), 351-371 (ILGWGWLALTLLGVPWLLSFA), and 384-404 (LAWAGLVYIVATLATLGWIAF).

It belongs to the glycosyltransferase 87 family.

Its subcellular location is the cell membrane. It functions in the pathway phospholipid metabolism; phosphatidylinositol metabolism. Functionally, catalyzes the alpha-1,2 addition of a mannose residue from polyprenol-phosphate-mannose (PPM) to a monoacyl phosphatidylinositol tetramannoside (AcPIM4) to generate a monoacyl phosphatidylinositol pentamannoside (AcPIM5). This Mycolicibacterium smegmatis (strain ATCC 700084 / mc(2)155) (Mycobacterium smegmatis) protein is Polyprenol-phosphate-mannose-dependent alpha-(1-2)-phosphatidylinositol pentamannoside mannosyltransferase.